Reading from the N-terminus, the 225-residue chain is Mitochondrial inner membrane protease ATP23 (225 aa).

A divalent metal cation is bound at residue histidine 124. The active site involves glutamate 125. Histidine 128 contributes to the a divalent metal cation binding site.

This sequence belongs to the peptidase M76 family.

Its subcellular location is the mitochondrion inner membrane. Functionally, has a dual role in the assembly of mitochondrial ATPase. Acts as a protease that removes N-terminal residues of mitochondrial ATPase CF(0) subunit 6 at the intermembrane space side. Also involved in the correct assembly of the membrane-embedded ATPase CF(0) particle, probably mediating association of subunit 6 with the subunit 9 ring. In Candida glabrata (strain ATCC 2001 / BCRC 20586 / JCM 3761 / NBRC 0622 / NRRL Y-65 / CBS 138) (Yeast), this protein is Mitochondrial inner membrane protease ATP23 (ATP23).